The sequence spans 941 residues: Glycine dehydrogenase (decarboxylating) (941 aa).

Lys-692 carries the N6-(pyridoxal phosphate)lysine modification.

This sequence belongs to the GcvP family. The glycine cleavage system is composed of four proteins: P, T, L and H. Pyridoxal 5'-phosphate serves as cofactor.

The enzyme catalyses N(6)-[(R)-lipoyl]-L-lysyl-[glycine-cleavage complex H protein] + glycine + H(+) = N(6)-[(R)-S(8)-aminomethyldihydrolipoyl]-L-lysyl-[glycine-cleavage complex H protein] + CO2. The glycine cleavage system catalyzes the degradation of glycine. The P protein binds the alpha-amino group of glycine through its pyridoxal phosphate cofactor; CO(2) is released and the remaining methylamine moiety is then transferred to the lipoamide cofactor of the H protein. This Mycolicibacterium paratuberculosis (strain ATCC BAA-968 / K-10) (Mycobacterium paratuberculosis) protein is Glycine dehydrogenase (decarboxylating).